The sequence spans 751 residues: Probable alpha-galactosidase C (751 aa).

The N-terminal stretch at Met1–Ala27 is a signal peptide. N-linked (GlcNAc...) asparagine glycosylation is found at Asn49, Asn57, Asn162, Asn186, Asn194, Asn366, Asn433, Asn452, and Asn500. Catalysis depends on Asp510, which acts as the Nucleophile. Asp572 (proton donor) is an active-site residue. An N-linked (GlcNAc...) asparagine glycan is attached at Asn720.

This sequence belongs to the glycosyl hydrolase 36 family. As to quaternary structure, homotetramer. The cofactor is Mg(2+). NAD(+) serves as cofactor.

The protein localises to the secreted. It catalyses the reaction Hydrolysis of terminal, non-reducing alpha-D-galactose residues in alpha-D-galactosides, including galactose oligosaccharides, galactomannans and galactolipids.. Functionally, hydrolyzes a variety of simple alpha-D-galactoside as well as more complex molecules such as oligosaccharides and polysaccharides. The sequence is that of Probable alpha-galactosidase C (aglC) from Aspergillus flavus (strain ATCC 200026 / FGSC A1120 / IAM 13836 / NRRL 3357 / JCM 12722 / SRRC 167).